A 413-amino-acid polypeptide reads, in one-letter code: 2,3-diketo-5-methylthiopentyl-1-phosphate enolase (413 aa).

K98 (proton acceptor) is an active-site residue. Substrate-binding positions include K147, 173 to 176 (KDDE), H264, G337, and 359 to 360 (GG). The Mg(2+) site is built by K173, D175, and E176. K173 is subject to N6-carboxylysine.

This sequence belongs to the RuBisCO large chain family. Type IV subfamily. As to quaternary structure, homodimer. Mg(2+) serves as cofactor.

The enzyme catalyses 5-methylsulfanyl-2,3-dioxopentyl phosphate = 2-hydroxy-5-methylsulfanyl-3-oxopent-1-enyl phosphate. It functions in the pathway amino-acid biosynthesis; L-methionine biosynthesis via salvage pathway; L-methionine from S-methyl-5-thio-alpha-D-ribose 1-phosphate: step 3/6. Functionally, catalyzes the enolization of 2,3-diketo-5-methylthiopentyl-1-phosphate (DK-MTP-1-P) into 2-hydroxy-3-keto-5-methylthiopentenyl-1-phosphate (HK-MTPenyl-1-P). This Geobacillus kaustophilus (strain HTA426) protein is 2,3-diketo-5-methylthiopentyl-1-phosphate enolase (mtnW).